We begin with the raw amino-acid sequence, 158 residues long: 2-C-methyl-D-erythritol 2,4-cyclodiphosphate synthase (158 aa).

Residues aspartate 9 and histidine 11 each coordinate a divalent metal cation. 4-CDP-2-C-methyl-D-erythritol 2-phosphate is bound by residues 9–11 and 35–36; these read DVH and HS. Histidine 43 contributes to the a divalent metal cation binding site. 4-CDP-2-C-methyl-D-erythritol 2-phosphate is bound by residues 57–59, 62–66, 101–107, 133–136, phenylalanine 140, and arginine 143; these read DIG, FPDTD, AQKPKMA, and TTTE.

It belongs to the IspF family. As to quaternary structure, homotrimer. Requires a divalent metal cation as cofactor.

It carries out the reaction 4-CDP-2-C-methyl-D-erythritol 2-phosphate = 2-C-methyl-D-erythritol 2,4-cyclic diphosphate + CMP. It functions in the pathway isoprenoid biosynthesis; isopentenyl diphosphate biosynthesis via DXP pathway; isopentenyl diphosphate from 1-deoxy-D-xylulose 5-phosphate: step 4/6. In terms of biological role, involved in the biosynthesis of isopentenyl diphosphate (IPP) and dimethylallyl diphosphate (DMAPP), two major building blocks of isoprenoid compounds. Catalyzes the conversion of 4-diphosphocytidyl-2-C-methyl-D-erythritol 2-phosphate (CDP-ME2P) to 2-C-methyl-D-erythritol 2,4-cyclodiphosphate (ME-CPP) with a corresponding release of cytidine 5-monophosphate (CMP). This chain is 2-C-methyl-D-erythritol 2,4-cyclodiphosphate synthase, found in Bacillus licheniformis (strain ATCC 14580 / DSM 13 / JCM 2505 / CCUG 7422 / NBRC 12200 / NCIMB 9375 / NCTC 10341 / NRRL NRS-1264 / Gibson 46).